Consider the following 366-residue polypeptide: UDP-N-acetylglucosamine--N-acetylmuramyl-(pentapeptide) pyrophosphoryl-undecaprenol N-acetylglucosamine transferase (366 aa).

Residues 14–16, asparagine 128, arginine 169, serine 201, isoleucine 251, and glutamine 296 each bind UDP-N-acetyl-alpha-D-glucosamine; that span reads TGG.

Belongs to the glycosyltransferase 28 family. MurG subfamily.

Its subcellular location is the cell inner membrane. It carries out the reaction di-trans,octa-cis-undecaprenyl diphospho-N-acetyl-alpha-D-muramoyl-L-alanyl-D-glutamyl-meso-2,6-diaminopimeloyl-D-alanyl-D-alanine + UDP-N-acetyl-alpha-D-glucosamine = di-trans,octa-cis-undecaprenyl diphospho-[N-acetyl-alpha-D-glucosaminyl-(1-&gt;4)]-N-acetyl-alpha-D-muramoyl-L-alanyl-D-glutamyl-meso-2,6-diaminopimeloyl-D-alanyl-D-alanine + UDP + H(+). Its pathway is cell wall biogenesis; peptidoglycan biosynthesis. Functionally, cell wall formation. Catalyzes the transfer of a GlcNAc subunit on undecaprenyl-pyrophosphoryl-MurNAc-pentapeptide (lipid intermediate I) to form undecaprenyl-pyrophosphoryl-MurNAc-(pentapeptide)GlcNAc (lipid intermediate II). The protein is UDP-N-acetylglucosamine--N-acetylmuramyl-(pentapeptide) pyrophosphoryl-undecaprenol N-acetylglucosamine transferase of Christiangramia forsetii (strain DSM 17595 / CGMCC 1.15422 / KT0803) (Gramella forsetii).